Here is a 100-residue protein sequence, read N- to C-terminus: Large ribosomal subunit protein uL23 (100 aa).

The protein belongs to the universal ribosomal protein uL23 family. Part of the 50S ribosomal subunit. Contacts protein L29, and trigger factor when it is bound to the ribosome.

Functionally, one of the early assembly proteins it binds 23S rRNA. One of the proteins that surrounds the polypeptide exit tunnel on the outside of the ribosome. Forms the main docking site for trigger factor binding to the ribosome. The polypeptide is Large ribosomal subunit protein uL23 (Thermotoga maritima (strain ATCC 43589 / DSM 3109 / JCM 10099 / NBRC 100826 / MSB8)).